The following is a 540-amino-acid chain: Chaperonin GroEL (540 aa).

ATP is bound by residues Thr-30 to Pro-33, Lys-51, Asp-87 to Thr-91, Gly-415, Asn-479 to Ala-481, and Asp-495.

This sequence belongs to the chaperonin (HSP60) family. Forms a cylinder of 14 subunits composed of two heptameric rings stacked back-to-back. Interacts with the co-chaperonin GroES.

The protein resides in the cytoplasm. It carries out the reaction ATP + H2O + a folded polypeptide = ADP + phosphate + an unfolded polypeptide.. In terms of biological role, together with its co-chaperonin GroES, plays an essential role in assisting protein folding. The GroEL-GroES system forms a nano-cage that allows encapsulation of the non-native substrate proteins and provides a physical environment optimized to promote and accelerate protein folding. In Pectobacterium carotovorum subsp. carotovorum (Erwinia carotovora subsp. carotovora), this protein is Chaperonin GroEL.